The primary structure comprises 419 residues: DNA-directed RNA polymerase I subunit RPA49 (419 aa).

Phosphoserine is present on residues Ser35 and Ser163. Lys373 bears the N6-acetyllysine mark. Residues Gly397–Thr419 form a disordered region.

It belongs to the eukaryotic RPA49/POLR1E RNA polymerase subunit family. Component of the RNA polymerase I (Pol I) complex consisting of 13 subunits: a ten-subunit catalytic core composed of POLR1A/RPA1, POLR1B/RPA2, POLR1C/RPAC1, POLR1D/RPAC2, POLR1H/RPA12, POLR2E/RPABC1, POLR2F/RPABC2, POLR2H/RPABC3, POLR2K/RPABC4 and POLR2L/RPABC5; a mobile stalk subunit POLR1F/RPA43 protruding from the core and additional subunits homologous to general transcription factors POLR1E/RPA49 and POLR1G/RPA34. Forms a heterodimer with POLR1G/RPA34. Interacts with POLR1G. Also binds UBTF/UBF. Interacts with PWP1. Acetylated at Lys-373 by CREBBP/CBP, leading to decreased RNA polymerase I transcription. In normal conditions, deacetylated by SIRT7, promoting the association of RNA polymerase I with the rDNA promoter region and coding region. In response to stress, SIRT7 is released from nucleoli leading to hyperacetylation of POLR1E/PAF53 and decreased association of RNA polymerase I with the rDNA promoter region.

The protein localises to the nucleus. Its subcellular location is the nucleolus. Functionally, component of RNA polymerase I (Pol I), a DNA-dependent RNA polymerase which synthesizes ribosomal RNA precursors using the four ribonucleoside triphosphates as substrates. Appears to be involved in the formation of the initiation complex at the promoter by mediating the interaction between Pol I and UBTF/UBF. The chain is DNA-directed RNA polymerase I subunit RPA49 (POLR1E) from Homo sapiens (Human).